The primary structure comprises 309 residues: Olfactory receptor 5AC2 (309 aa).

Residues 1-27 (MDISEGNKTLVTEFVLTGLTDRPWLHV) lie on the Extracellular side of the membrane. Asn-7 carries an N-linked (GlcNAc...) asparagine glycan. A helical transmembrane segment spans residues 28 to 48 (LFFVVFLVVYLITMVGNLGLI). The Cytoplasmic portion of the chain corresponds to 49 to 56 (VLIWNDPH). Residues 57–77 (LHMPMYLFLGGLAFSDACTST) traverse the membrane as a helical segment. At 78–101 (SITPRMLVNFLDKTAMISLAECIT) the chain is on the extracellular side. Cys-99 and Cys-191 are joined by a disulfide. A helical transmembrane segment spans residues 102–122 (QFYFFASSATTECFLLVMMAY). Topologically, residues 123–135 (DRYVAICNPLLYP) are cytoplasmic. The helical transmembrane segment at 136-156 (VMMSNKLSAQLLSISYVIGFL) threads the bilayer. Topologically, residues 157–198 (HPLVHVSLLLRLTFCRFNIIHYFYCEILQLFKISCNGPSINA) are extracellular. A helical membrane pass occupies residues 199–219 (LMIFIFGAFIQIPTLMTIIIS). Residues 220 to 239 (YTRVLFDILKKKSEKGRSKA) are Cytoplasmic-facing. A helical membrane pass occupies residues 240-260 (FSTCGAHLLSVSLYYGTLIFM). Over 261 to 273 (YVRPASGLAEDQD) the chain is Extracellular. Residues 274–294 (KVYSLFYTIIIPLLNPFIYSL) form a helical membrane-spanning segment. The Cytoplasmic portion of the chain corresponds to 295-309 (RNKKVMHALRRVIRK).

The protein belongs to the G-protein coupled receptor 1 family.

The protein localises to the cell membrane. Odorant receptor. The chain is Olfactory receptor 5AC2 (OR5AC2) from Homo sapiens (Human).